The primary structure comprises 638 residues: Threonine--tRNA ligase (638 aa).

In terms of domain architecture, TGS spans 1–61; the sequence is MPVVTLPDGS…EADAEVALVT (61 aa). Residues 242 to 533 are catalytic; sequence DHRKLGKALD…LTEHYAGQYP (292 aa). Residues cysteine 333, histidine 384, and histidine 510 each coordinate Zn(2+).

Belongs to the class-II aminoacyl-tRNA synthetase family. In terms of assembly, homodimer. Requires Zn(2+) as cofactor.

The protein localises to the cytoplasm. The enzyme catalyses tRNA(Thr) + L-threonine + ATP = L-threonyl-tRNA(Thr) + AMP + diphosphate + H(+). Functionally, catalyzes the attachment of threonine to tRNA(Thr) in a two-step reaction: L-threonine is first activated by ATP to form Thr-AMP and then transferred to the acceptor end of tRNA(Thr). Also edits incorrectly charged L-seryl-tRNA(Thr). The polypeptide is Threonine--tRNA ligase (Methylococcus capsulatus (strain ATCC 33009 / NCIMB 11132 / Bath)).